Reading from the N-terminus, the 160-residue chain is Crossover junction endodeoxyribonuclease RuvC (160 aa).

Active-site residues include Asp9, Glu68, and Asp141. Residues Asp9, Glu68, and Asp141 each coordinate Mg(2+).

The protein belongs to the RuvC family. Homodimer which binds Holliday junction (HJ) DNA. The HJ becomes 2-fold symmetrical on binding to RuvC with unstacked arms; it has a different conformation from HJ DNA in complex with RuvA. In the full resolvosome a probable DNA-RuvA(4)-RuvB(12)-RuvC(2) complex forms which resolves the HJ. It depends on Mg(2+) as a cofactor.

The protein localises to the cytoplasm. The catalysed reaction is Endonucleolytic cleavage at a junction such as a reciprocal single-stranded crossover between two homologous DNA duplexes (Holliday junction).. In terms of biological role, the RuvA-RuvB-RuvC complex processes Holliday junction (HJ) DNA during genetic recombination and DNA repair. Endonuclease that resolves HJ intermediates. Cleaves cruciform DNA by making single-stranded nicks across the HJ at symmetrical positions within the homologous arms, yielding a 5'-phosphate and a 3'-hydroxyl group; requires a central core of homology in the junction. The consensus cleavage sequence is 5'-(A/T)TT(C/G)-3'. Cleavage occurs on the 3'-side of the TT dinucleotide at the point of strand exchange. HJ branch migration catalyzed by RuvA-RuvB allows RuvC to scan DNA until it finds its consensus sequence, where it cleaves and resolves the cruciform DNA. This chain is Crossover junction endodeoxyribonuclease RuvC, found in Campylobacter jejuni (strain RM1221).